A 92-amino-acid polypeptide reads, in one-letter code: Large ribosomal subunit protein eL31 (92 aa).

This sequence belongs to the eukaryotic ribosomal protein eL31 family.

The polypeptide is Large ribosomal subunit protein eL31 (Haloquadratum walsbyi (strain DSM 16790 / HBSQ001)).